The following is a 284-amino-acid chain: ATP synthase subunit beta, chloroplastic (284 aa).

Belongs to the ATPase alpha/beta chains family. In terms of assembly, F-type ATPases have 2 components, CF(1) - the catalytic core - and CF(0) - the membrane proton channel. CF(1) has five subunits: alpha(3), beta(3), gamma(1), delta(1), epsilon(1). CF(0) has four main subunits: a(1), b(1), b'(1) and c(9-12).

The protein resides in the plastid. It is found in the chloroplast thylakoid membrane. It carries out the reaction ATP + H2O + 4 H(+)(in) = ADP + phosphate + 5 H(+)(out). In terms of biological role, produces ATP from ADP in the presence of a proton gradient across the membrane. The catalytic sites are hosted primarily by the beta subunits. The chain is ATP synthase subunit beta, chloroplastic (atpB) from Asplenium nidus (Bird's nest fern).